We begin with the raw amino-acid sequence, 1200 residues long: PAN2-PAN3 deadenylation complex catalytic subunit Pan2 (1200 aa).

WD repeat units lie at residues 153 to 193 (DENE…QKYA), 195 to 231 (ETPGVTIMRQTNRFFFCGHTSGKVSLRDLRSFKVEHE), 244 to 280 (VHGNLLAACGFSSRLTGLACDRFLKVYDLRMMRAITP), and 328 to 367 (PVGPLLMTFDVSASKQALAFGDSEGCVHLWTDSPEPSFNP). The tract at residues 368-484 (YSRETEFALP…PTGREEEPLH (117 aa)) is linker. In terms of domain architecture, USP spans 485–923 (TVSKKYRKVT…VPAILYYVKR (439 aa)). The residue at position 784 (Ser-784) is a Phosphoserine. The Exonuclease domain occupies 974 to 1146 (VGLDAEFVTL…EDARTALQLY (173 aa)). Asp-977, Glu-979, Asp-1086, and Asp-1138 together coordinate a divalent metal cation. The residue at position 1188 (Ser-1188) is a Phosphoserine.

The protein belongs to the peptidase C19 family. PAN2 subfamily. Forms a heterotrimer with an asymmetric homodimer of the regulatory subunit PAN3 to form the poly(A)-nuclease (PAN) deadenylation complex. Interacts with PAN3 isoform 1/Pan3L and isoform 3/Pan3S. Interacts with ZFP36. A divalent metal cation is required as a cofactor.

The protein localises to the cytoplasm. The protein resides in the P-body. Its subcellular location is the nucleus. It catalyses the reaction Exonucleolytic cleavage of poly(A) to 5'-AMP.. Positively regulated by the regulatory subunit PAN3. Catalytic subunit of the poly(A)-nuclease (PAN) deadenylation complex, one of two cytoplasmic mRNA deadenylases involved in general and miRNA-mediated mRNA turnover. PAN specifically shortens poly(A) tails of RNA and the activity is stimulated by poly(A)-binding protein (PABP). PAN deadenylation is followed by rapid degradation of the shortened mRNA tails by the CCR4-NOT complex. Deadenylated mRNAs are then degraded by two alternative mechanisms, namely exosome-mediated 3'-5' exonucleolytic degradation, or deadenylation-dependent mRNA decaping and subsequent 5'-3' exonucleolytic degradation by XRN1. Also acts as an important regulator of the HIF1A-mediated hypoxic response. Required for HIF1A mRNA stability independent of poly(A) tail length regulation. The sequence is that of PAN2-PAN3 deadenylation complex catalytic subunit Pan2 from Mus musculus (Mouse).